Reading from the N-terminus, the 893-residue chain is 104 kDa microneme/rhoptry antigen (893 aa).

A signal peptide spans 1-19 (MKFLVLLFNILCLFPILGA). Disordered stretches follow at residues 492 to 666 (SKKK…FDPK), 681 to 799 (KTKE…PTGK), and 818 to 873 (KEHM…RKPD). 2 stretches are compositionally biased toward basic and acidic residues: residues 525-565 (SESK…EHKP) and 573-591 (KRPE…ESPK). Residues 595–606 (RPVSPQRPVSPK) are compositionally biased toward low complexity. Basic and acidic residues-rich tracts occupy residues 731–755 (EEVK…DSPT), 788–797 (EAGRILRDPT), and 818–830 (KEHM…KIVV). Over residues 831 to 841 (DDDGTEADDED) the composition is skewed to acidic residues. Residues 851–869 (STVRRRRPRPKKSSKSSKP) are compositionally biased toward basic residues. D873 carries GPI-anchor amidated aspartate lipidation. A propeptide spans 874–893 (SAFVPSIIFIFLVSLIVGIL) (removed in mature form).

The protein resides in the cell membrane. This is 104 kDa microneme/rhoptry antigen from Theileria annulata.